We begin with the raw amino-acid sequence, 776 residues long: Microtubule-associated protein tau (776 aa).

Basic and acidic residues predominate over residues 1–26 (MAEPRQEFEVMEDHAGTYGLGDRKDQ). Disordered stretches follow at residues 1–263 (MAEP…PAKG) and 276–591 (STEI…LKNV). Position 2 is an N-acetylalanine (Ala-2). Phosphotyrosine occurs at positions 18 and 29. Residue Lys-44 forms a Glycyl lysine isopeptide (Lys-Gly) (interchain with G-Cter in ubiquitin) linkage. Phosphoserine is present on residues Ser-46 and Ser-61. Over residues 61–71 (SETSDAKSTPT) the composition is skewed to polar residues. A phosphothreonine mark is found at Thr-69, Thr-71, and Thr-111. 2 stretches are compositionally biased toward basic and acidic residues: residues 179–189 (EGGRHAPELLK) and 207–216 (GGKERPGSKE). A Phosphoserine modification is found at Ser-214. Positions 217 to 228 (EVDEDRDVDESS) are enriched in acidic residues. Residues 314–323 (EQAHSEEHLG) show a composition bias toward basic and acidic residues. Over residues 324–340 (RAAFPGAPGEGPEARGP) the composition is skewed to low complexity. 2 stretches are compositionally biased toward basic and acidic residues: residues 344–356 (EDTK…ESSE) and 381–393 (KSKD…DKKA). A compositionally biased stretch (polar residues) spans 440-452 (KYVSSVTPRTGSS). Basic and acidic residues predominate over residues 455 to 466 (KEMKLKGADGKT). At Thr-470 the chain carries Phosphothreonine. Arg-472 is subject to Omega-N-methylarginine. Lys-480 is modified (N6,N6-dimethyllysine; alternate). Lys-480 is modified (N6-acetyllysine; alternate). Thr-486, Thr-492, and Thr-498 each carry phosphothreonine. Phosphoserine is present on residues Ser-502, Ser-526, and Ser-530. Positions 517-528 (RSERGEPPKSGD) are enriched in basic and acidic residues. The segment covering 529–549 (RSGYSSPGSPGTPGSRSRTPS) has biased composition (low complexity). Tyr-532 carries the post-translational modification Phosphotyrosine. Phosphoserine occurs at positions 533, 534, and 537. 2 positions are modified to phosphothreonine: Thr-540 and Thr-547. Ser-549 carries the phosphoserine modification. Thr-552 is modified (phosphothreonine). Lys-560 is modified (N6-acetyllysine). Thr-566 bears the Phosphothreonine mark. 2 positions are modified to phosphoserine: Ser-570 and Ser-572. Tau/MAP repeat units lie at residues 579–609 (QTAP…GGGK), 610–640 (VQII…GGGS), 641–671 (VQIV…GGGQ), and 672–703 (VEVK…GGGN). Lys-589 is covalently cross-linked (Glycyl lysine isopeptide (Lys-Gly) (interchain with G-Cter in ubiquitin)). Residue Lys-594 is modified to N6-acetyllysine; alternate. At Lys-594 the chain carries N6-methyllysine; alternate. Lys-594 is covalently cross-linked (Glycyl lysine isopeptide (Lys-Gly) (interchain with G-Cter in ubiquitin); alternate). A Phosphoserine modification is found at Ser-597. Lys-602 is covalently cross-linked (Glycyl lysine isopeptide (Lys-Gly) (interchain with G-Cter in ubiquitin)). Lys-616 carries the N6-acetyllysine; alternate modification. A Glycyl lysine isopeptide (Lys-Gly) (interchain with G-Cter in ubiquitin); alternate cross-link involves residue Lys-616. Phosphoserine occurs at positions 620 and 624. Residue Lys-625 is modified to N6-acetyllysine. Ser-628 bears the Phosphoserine mark. Lys-633 carries the post-translational modification N6-acetyllysine; alternate. A Glycyl lysine isopeptide (Lys-Gly) (interchain with G-Cter in ubiquitin); alternate cross-link involves residue Lys-633. The residue at position 640 (Ser-640) is a Phosphoserine. Lys-646 carries the N6,N6-dimethyllysine; alternate modification. N6-acetyllysine; alternate is present on residues Lys-646, Lys-652, and Lys-656. Residues Lys-646, Lys-652, and Lys-656 each participate in a glycyl lysine isopeptide (Lys-Gly) (interchain with G-Cter in ubiquitin); alternate cross-link. Ser-659 is subject to Phosphoserine. Residues Lys-666, Lys-678, and Lys-682 each carry the N6-acetyllysine; alternate modification. Glycyl lysine isopeptide (Lys-Gly) (interchain with G-Cter in ubiquitin); alternate cross-links involve residues Lys-666, Lys-678, and Lys-682. Residue Arg-684 is modified to Omega-N-methylarginine. Ser-687 bears the Phosphoserine mark. Lys-688 is covalently cross-linked (Glycyl lysine isopeptide (Lys-Gly) (interchain with G-Cter in ubiquitin)). Ser-691 is modified (phosphoserine). At Lys-704 the chain carries N6-acetyllysine; alternate. Lys-704 is covalently cross-linked (Glycyl lysine isopeptide (Lys-Gly) (interchain with G-Cter in ubiquitin); alternate). Residue Lys-710 forms a Glycyl lysine isopeptide (Lys-Gly) (interchain with G-Cter in ubiquitin) linkage. N6-acetyllysine; alternate is present on Lys-720. Residue Lys-720 forms a Glycyl lysine isopeptide (Lys-Gly) (interchain with G-Cter in ubiquitin); alternate linkage. Tyr-729 is modified (phosphotyrosine). A phosphoserine mark is found at Ser-731 and Ser-735. The tract at residues 733–752 (VVSGDTSPRHLSNVSSTGSI) is disordered. Residues 736 to 751 (GDTSPRHLSNVSSTGS) are compositionally biased toward polar residues. Thr-738 carries the post-translational modification Phosphothreonine. Residues Ser-739, Ser-744, Ser-751, and Ser-757 each carry the phosphoserine modification. Position 762 is a phosphothreonine (Thr-762).

Interacts with MARK1, MARK2, MARK3 and MARK4. Interacts with SQSTM1 when polyubiquitinated. Interacts with PSMC2 through SQSTM1. Interacts with FKBP4. Binds to CSNK1D. Interacts with SGK1. Interacts with EPM2A; the interaction dephosphorylates MAPT at Ser-396. Interacts with PIN1. Interacts with LRRK2. Interacts with LRP1, leading to endocytosis; this interaction is reduced in the presence of LRPAP1/RAP. In terms of processing, polyubiquitinated. Requires functional TRAF6 and may provoke SQSTM1-dependent degradation by the proteasome. Post-translationally, phosphorylation at various serine and threonine residues in S-P or T-P motifs by proline-directed protein kinases (PDPK1, CDK1, CDK5, GSK3, MAPK) (a few sites per protein in interphase, more in mitosis), and at serine residues in K-X-G-S motifs by MAP/microtubule affinity-regulating kinase (MARK1, MARK2, MARK3 or MARK4), causing detachment from microtubules, and their disassembly. Phosphorylation at Ser-597 by BRSK1 and BRSK2 in neurons affects ability to bind microtubules and plays a role in neuron polarization. Phosphorylation at Ser-214 by SGK1 mediates microtubule depolymerization and neurite formation in hippocampal neurons. Phosphorylated by PHK. Dephosphorylation at several serine and threonine residues by the serine/threonine phosphatase PPP5C.

The protein resides in the cytoplasm. Its subcellular location is the cytosol. It localises to the cell membrane. It is found in the cytoskeleton. The protein localises to the cell projection. The protein resides in the axon. Its subcellular location is the dendrite. Its function is as follows. Promotes microtubule assembly and stability, and might be involved in the establishment and maintenance of neuronal polarity. The C-terminus binds axonal microtubules while the N-terminus binds neural plasma membrane components, suggesting that tau functions as a linker protein between both. Axonal polarity is predetermined by tau localization (in the neuronal cell) in the domain of the cell body defined by the centrosome. The short isoforms allow plasticity of the cytoskeleton whereas the longer isoforms may preferentially play a role in its stabilization. The chain is Microtubule-associated protein tau (MAPT) from Gorilla gorilla gorilla (Western lowland gorilla).